Consider the following 97-residue polypeptide: Large ribosomal subunit protein bL27 (97 aa).

A propeptide spanning residues 1–12 is cleaved from the precursor; that stretch reads MLKMNLANLQLF. The interval 14-38 is disordered; that stretch reads HKKGGGSTSNGRDSESKRLGAKAAD.

The protein belongs to the bacterial ribosomal protein bL27 family. In terms of processing, the N-terminus is cleaved by ribosomal processing cysteine protease Prp.

This is Large ribosomal subunit protein bL27 from Streptococcus mutans serotype c (strain ATCC 700610 / UA159).